The following is a 316-amino-acid chain: GTP cyclohydrolase FolE2 2 (316 aa).

It belongs to the GTP cyclohydrolase IV family.

The enzyme catalyses GTP + H2O = 7,8-dihydroneopterin 3'-triphosphate + formate + H(+). It functions in the pathway cofactor biosynthesis; 7,8-dihydroneopterin triphosphate biosynthesis; 7,8-dihydroneopterin triphosphate from GTP: step 1/1. Its function is as follows. Converts GTP to 7,8-dihydroneopterin triphosphate. This Burkholderia orbicola (strain MC0-3) protein is GTP cyclohydrolase FolE2 2.